The chain runs to 365 residues: D-alanine--D-alanine ligase (365 aa).

One can recognise an ATP-grasp domain in the interval 140–346 (KKILRRHGLQ…YSQLLTDLIY (207 aa)). Residue 173–228 (EKQLSYPIFVKPANLGSSVGISKVKNREELIQGIDLAVKYDMKCLAEEFIPGKEIE) participates in ATP binding. Mg(2+) is bound by residues aspartate 299, glutamate 313, and asparagine 315.

Belongs to the D-alanine--D-alanine ligase family. The cofactor is Mg(2+). Mn(2+) is required as a cofactor.

It is found in the cytoplasm. It carries out the reaction 2 D-alanine + ATP = D-alanyl-D-alanine + ADP + phosphate + H(+). It functions in the pathway cell wall biogenesis; peptidoglycan biosynthesis. Functionally, cell wall formation. The protein is D-alanine--D-alanine ligase of Natranaerobius thermophilus (strain ATCC BAA-1301 / DSM 18059 / JW/NM-WN-LF).